A 149-amino-acid chain; its full sequence is uncharacterized protein (149 aa).

It to B.subtilis XkdN.

This is an uncharacterized protein from Bacillus subtilis (strain 168).